Here is a 128-residue protein sequence, read N- to C-terminus: Aspartate 1-decarboxylase (128 aa).

Ser25 (schiff-base intermediate with substrate; via pyruvic acid) is an active-site residue. A Pyruvic acid (Ser) modification is found at Ser25. Thr57 is a substrate binding site. The active-site Proton donor is Tyr58. 73 to 75 (GSA) provides a ligand contact to substrate.

It belongs to the PanD family. As to quaternary structure, heterooctamer of four alpha and four beta subunits. Pyruvate serves as cofactor. Post-translationally, is synthesized initially as an inactive proenzyme, which is activated by self-cleavage at a specific serine bond to produce a beta-subunit with a hydroxyl group at its C-terminus and an alpha-subunit with a pyruvoyl group at its N-terminus.

The protein localises to the cytoplasm. The enzyme catalyses L-aspartate + H(+) = beta-alanine + CO2. It functions in the pathway cofactor biosynthesis; (R)-pantothenate biosynthesis; beta-alanine from L-aspartate: step 1/1. Functionally, catalyzes the pyruvoyl-dependent decarboxylation of aspartate to produce beta-alanine. The protein is Aspartate 1-decarboxylase of Burkholderia pseudomallei (strain 668).